The primary structure comprises 645 residues: Acetyl-coenzyme A synthetase (645 aa).

Residues 190–193 (RGSK), Thr-308, and Asn-332 contribute to the CoA site. Residues 384–386 (GEP), 408–413 (DTWWQT), Asp-497, and Arg-512 each bind ATP. Ser-520 serves as a coordination point for CoA. ATP is bound at residue Arg-523. Mg(2+) contacts are provided by Val-534, His-536, and Val-539. Arg-581 is a CoA binding site. N6-acetyllysine is present on Lys-606.

This sequence belongs to the ATP-dependent AMP-binding enzyme family. It depends on Mg(2+) as a cofactor. Acetylated. Deacetylation by the SIR2-homolog deacetylase activates the enzyme.

It catalyses the reaction acetate + ATP + CoA = acetyl-CoA + AMP + diphosphate. In terms of biological role, catalyzes the conversion of acetate into acetyl-CoA (AcCoA), an essential intermediate at the junction of anabolic and catabolic pathways. AcsA undergoes a two-step reaction. In the first half reaction, AcsA combines acetate with ATP to form acetyl-adenylate (AcAMP) intermediate. In the second half reaction, it can then transfer the acetyl group from AcAMP to the sulfhydryl group of CoA, forming the product AcCoA. The sequence is that of Acetyl-coenzyme A synthetase from Bdellovibrio bacteriovorus (strain ATCC 15356 / DSM 50701 / NCIMB 9529 / HD100).